A 287-amino-acid chain; its full sequence is 2-dehydro-3-deoxyphosphooctonate aldolase (287 aa).

Belongs to the KdsA family.

It localises to the cytoplasm. It carries out the reaction D-arabinose 5-phosphate + phosphoenolpyruvate + H2O = 3-deoxy-alpha-D-manno-2-octulosonate-8-phosphate + phosphate. It participates in carbohydrate biosynthesis; 3-deoxy-D-manno-octulosonate biosynthesis; 3-deoxy-D-manno-octulosonate from D-ribulose 5-phosphate: step 2/3. The protein operates within bacterial outer membrane biogenesis; lipopolysaccharide biosynthesis. The polypeptide is 2-dehydro-3-deoxyphosphooctonate aldolase (Leptospira interrogans serogroup Icterohaemorrhagiae serovar copenhageni (strain Fiocruz L1-130)).